The sequence spans 670 residues: Leiomodin-3 (670 aa).

Disordered regions lie at residues 34 to 72 (EMDDIAPDERVPVGLRQKDASHEMTVRDCTEPESEEEID), 94 to 120 (EIAPDERVPVGMRQRDQTDKPPTGSFD), 139 to 165 (EEERVPTTLLPSQKTNEEHEAKNEDKV), and 202 to 274 (EDKV…NWVP). 5 stretches are compositionally biased toward basic and acidic residues: residues 40–63 (PDERVPVGLRQKDASHEMTVRDCT), 97–112 (PDERVPVGMRQRDQTD), 153–163 (TNEEHEAKNED), 205–214 (VCDKPVKTDL), and 249–261 (TETKVNEEKKEDS). The stretch at 150 to 183 (SQKTNEEHEAKNEDKVEELELVYEEIVEEVEGGQ) forms a coiled coil. The stretch at 464–494 (DRQRQQRMEEQKLQQMKEQRKVMEMYEDSLN) forms a coiled coil. The disordered stretch occupies residues 517 to 556 (NGAEDIPEDSPEPSPQPSPPHQLCKTQHLAPQQHPPNLST). The region spanning 637–656 (PRDHLLSEIRQSNVAYLKAV) is the WH2 domain.

This sequence belongs to the tropomodulin family. Expressed in muscle (at protein level).

It is found in the cytoplasm. Its subcellular location is the myofibril. It localises to the sarcomere. The protein resides in the a band. The protein localises to the m line. It is found in the cytoskeleton. In terms of biological role, essential for the organization of sarcomeric thin filaments in skeletal muscle. The protein is Leiomodin-3 of Danio rerio (Zebrafish).